The sequence spans 685 residues: Protein argonaute (685 aa).

The segment at 1-99 is N-terminal domain; sequence MNHLGKTEVF…LYPKGRRPLD (99 aa). Positions 100–176 are linker L1; sequence PKDPGERSVL…VDPAYRILCE (77 aa). Positions 169 to 265 constitute a PAZ domain; the sequence is PAYRILCEMS…HLTGLLVPVL (97 aa). Residues 272–337 form a linker L2 region; sequence EEEGSLALSL…SKPADALRVG (66 aa). Positions 338–463 are mid domain; the sequence is FYRAQETALA…LLAKAGLQVV (126 aa). The segment at 464-685 is PIWI domain; that stretch reads ALSGAYPAEL…EVDREKLFFV (222 aa). Residues Asp478, Glu512, Asp546, and Asp660 contribute to the active site. Asp478 provides a ligand contact to Mn(2+). Residues 507-671 enclose the Piwi domain; that stretch reads EAQAGERIPQ…LVKEVGRLGI (165 aa). Mn(2+) is bound by residues Asp546, Asp660, and Val685.

It belongs to the argonaute family. Long pAgo subfamily. In terms of assembly, coimmunoprecipitates with a number of proteins involved in DNA replication or recombination including RepA (initiates replication), AddA/B (TT_C0638 and TT_C0639), ArgR, GyrA/B, HU (TT_C0984), PriA, Rad52 (TT_C1923), RecJ, SSB, TopA and UvrB. Most proteins remain associated with TtAgo after DNase treatment and associate with catalytically inactive protein. Mn(2+) is required as a cofactor.

In terms of biological role, a DNA-guided ssDNA endonuclease. Uses short ssDNA sequences as guides (gDNA, also called small interfering DNA, siDNA) to bind complementary DNA target strands, resulting in cleavage of the target DNA (tDNA). The cleavage site is 10 nucleotides (nt) downstream of the target residue base-paired with the 5'-end of the gDNA. Plays a role in completion of DNA replication, participates in decatenating replicated DNA and plasmid. In situ purifies with 5'-phosphorylated long DNA (about 1160 nt, maps to the whole chromosome and plasmid), 25-35 nt RNAs that map to the whole chromosome and 15-18 nt DNA that maps to the replication terminus region (ter) on the chromosome and plasmid. Most short DNA starts with dC. Has been shown to have guide sequence-independent dsDNase activity called 'chopping', which requires unstable DNA (high AT-content, multiple mismatches or low salt conditions), and could be used to generate gDNA. Preferentially binds tDNA with dC at its 3'-terminus. Has also been shown to have no detectable guide sequence-independent dsDNase activity. The latter study proposes TtAgo may acquire gDNA from nicked dsDNA, by binding to 5'-phosphorylated-dC nicks, then cleaving 10 nt away on the opposite strand; subsequently an exonuclease (maybe AddA-AddB helicase/nuclease) trims the ends to generate the gDNA. Involved in defense against invading mobile genetic elements. TtAgo interferes with plasmid DNA, stimulates expression of specific endogenous genes, including various CRISPR loci and at least part of the CRISPR adaptation machinery, but only when exogenous plasmid DNA is present. Upon purification from E.coli associates with gDNA 13-25 nt long with 5'-phosphorylated ends and with 10-150 nt RNA with 5'-OH. DNA corresponds to the expression plasmid rather than chromosomal DNA; 89% of gDNA starts with dC and 72% has dA in the second position. Endonucleolytically cleaves tDNA with 5'-phosphorylated gDNA but not 5'-phosphorylated gRNA; the active site is involved in processing or binding of ssDNA. Nicks or linearizes supercoiled plasmid target when it has the appropriate gDNA sequences, does not cleave linear tDNA. Positions 4 to 16 of the tDNA need to be base paired to the gDNA for efficient tDNA cleavage. Although the system can support single nucleotide insertions in either the gDNA or tDNA, in all cases cleavage activity is reduced, with a wide range of sequence- and position-specific effects. Its function is as follows. First characterized as a DNA-guided RNA endonuclease. Uses gDNA to bind complementary RNA target strands, resulting in cleavage of the target RNA. The cleavage site is 10 nucleotides (nt) downstream of the target residue base-paired with the 5'-end of the guide DNA. The protein is Protein argonaute of Thermus thermophilus (strain ATCC BAA-163 / DSM 7039 / HB27).